A 33-amino-acid chain; its full sequence is Brevinin-2DYc (33 aa).

A disulfide bridge links cysteine 27 with cysteine 33.

Expressed by the skin glands.

The protein resides in the secreted. Functionally, antimicrobial peptide. A mixture of Brevinin-2DYc/2DYd is active against the Gram-positive bacterium S.aureus (MIC=15 uM) and the Gram-negative bacterium E.coli (MIC=15 uM). This chain is Brevinin-2DYc, found in Rana dybowskii (Dybovsky's frog).